Reading from the N-terminus, the 55-residue chain is Sporulation killing factor (55 aa).

The propeptide occupies 1–29; sequence MKRNQKEWESVSKKGLMKPGGTSIVKAAG. C30 and C45 are joined by a disulfide. The segment at residues 30–55 is a cross-link (cyclopeptide (Cys-Ile)); it reads CMGCWASKSIAMTRVCALPHPAMRAI. The 2-(S-cysteinyl)-methionine (Cys-Met) cross-link spans 33–41; it reads CWASKSIAM.

This is a cyclic peptide. The first step in SKF maturation is probably thioether bond formation.

The protein resides in the secreted. Produces a 26-residue extracellular sporulation killing factor (SKF) that induces the lysis of other B.subtilis cells that have not entered the sporulation pathway, providing a source of nutrients to support sporulation, and at the same time delaying commitment to the energetically expensive and irreversible onset of sporulation. Can also inhibit growth of other bacteria at high concentrations. Addition of SKF to solid cultures induces killing, but it is much less effective than SDP (AC O34344). Has a role in protecting the secreted lipase LipA against proteolysis, either by modulating its folding or by acting as a protease inhibitor. This is Sporulation killing factor from Bacillus subtilis (strain 168).